A 335-amino-acid polypeptide reads, in one-letter code: tRNA N6-adenosine threonylcarbamoyltransferase (335 aa).

A divalent metal cation is bound by residues H109, H113, and Y130. Residues 130–134 (YVSGG), D162, G177, E181, and N266 each bind substrate. D294 serves as a coordination point for a divalent metal cation.

Belongs to the KAE1 / TsaD family. Component of the EKC/KEOPS complex composed of at least tp53rk, tprkb, osgep and lage3; the whole complex dimerizes. A divalent metal cation serves as cofactor.

It localises to the cytoplasm. It is found in the nucleus. The catalysed reaction is L-threonylcarbamoyladenylate + adenosine(37) in tRNA = N(6)-L-threonylcarbamoyladenosine(37) in tRNA + AMP + H(+). Component of the EKC/KEOPS complex that is required for the formation of a threonylcarbamoyl group on adenosine at position 37 (t(6)A37) in tRNAs that read codons beginning with adenine. The complex is probably involved in the transfer of the threonylcarbamoyl moiety of threonylcarbamoyl-AMP (TC-AMP) to the N6 group of A37. OSGEP likely plays a direct catalytic role in this reaction, but requires other protein(s) of the complex to fulfill this activity. The sequence is that of tRNA N6-adenosine threonylcarbamoyltransferase from Danio rerio (Zebrafish).